Here is a 618-residue protein sequence, read N- to C-terminus: Vacuolar-sorting receptor 5 (618 aa).

The first 23 residues, 1–23 (MSPSNKGTVLALILALTMVVVNG), serve as a signal peptide directing secretion. The Lumenal segment spans residues 24 to 563 (FSSRFFVEKS…IERRSGSRSR (540 aa)). Residues 58–164 (KYGGFMIGSV…SFGDSLKKAL (107 aa)) form the PA domain. Residues asparagine 81, asparagine 293, and asparagine 430 are each glycosylated (N-linked (GlcNAc...) asparagine). EGF-like domains lie at 412 to 462 (ETNE…TSCK) and 465 to 511 (GPAR…LKCE). Disulfide bonds link cysteine 416–cysteine 434, cysteine 423–cysteine 443, cysteine 445–cysteine 461, cysteine 469–cysteine 489, cysteine 476–cysteine 497, cysteine 499–cysteine 510, and cysteine 540–cysteine 553. The 43-residue stretch at 512–554 (DIDECKEKSACKCDGCKCKNNWGGYECKCSNNSIYMKEEDTCI) folds into the EGF-like 3; calcium-binding domain. A glycan (N-linked (GlcNAc...) asparagine) is linked at asparagine 542. Residues 564–584 (GLFTIVVLTAIAGISLGAYIF) traverse the membrane as a helical segment. The Cytoplasmic portion of the chain corresponds to 585–618 (YKYHLQSYMDSEIVSIMSQYIPLDSQSINQDSFK). Residues 604 to 607 (YIPL) carry the Tyrosine-based internalization motif motif.

The protein belongs to the VSR (BP-80) family. Expressed in seedlings, roots, leaves, flowers and siliques.

The protein localises to the membrane. The protein resides in the golgi apparatus membrane. It is found in the cytoplasmic vesicle. It localises to the clathrin-coated vesicle membrane. Its subcellular location is the prevacuolar compartment membrane. Functionally, vacuolar-sorting receptor (VSR) involved in clathrin-coated vesicles sorting from Golgi apparatus to vacuoles. In Arabidopsis thaliana (Mouse-ear cress), this protein is Vacuolar-sorting receptor 5 (VSR5).